A 229-amino-acid polypeptide reads, in one-letter code: Orotidine 5'-phosphate decarboxylase (229 aa).

Substrate-binding positions include Asp-12, Lys-34, 61-70 (DWKLHDIGAT), Thr-116, Arg-177, Gln-186, Gly-206, and Arg-207. The active-site Proton donor is Lys-63.

The protein belongs to the OMP decarboxylase family. Type 1 subfamily. As to quaternary structure, homodimer.

The enzyme catalyses orotidine 5'-phosphate + H(+) = UMP + CO2. Its pathway is pyrimidine metabolism; UMP biosynthesis via de novo pathway; UMP from orotate: step 2/2. Its function is as follows. Catalyzes the decarboxylation of orotidine 5'-monophosphate (OMP) to uridine 5'-monophosphate (UMP). This chain is Orotidine 5'-phosphate decarboxylase, found in Caulobacter sp. (strain K31).